The sequence spans 457 residues: NAC domain-containing protein 69 (457 aa).

The NAC domain maps to 4-153 (DLVGYRFYPT…NYVICQVMYK (150 aa)). Residues 107-159 (IGIKKTLVYYEGRVPKGVWTPWVMHEYHITCLPQDQRNYVICQVMYKGEDGDV) mediate DNA binding. 2 disordered regions span residues 158–180 (DVPSGGNNSSEPSQSLVSDSNTV) and 302–332 (DSNSDAESISATSYQGTSSPGDDSVGSSNRQ). Residues 162–180 (GGNNSSEPSQSLVSDSNTV) show a composition bias toward polar residues. Residues 302 to 311 (DSNSDAESIS) are compositionally biased toward low complexity. Polar residues predominate over residues 312–332 (ATSYQGTSSPGDDSVGSSNRQ). A helical transmembrane segment spans residues 421–441 (IYLMRMIIGFILLLALISNII).

The protein localises to the membrane. It localises to the nucleus. Transcription activator activated by proteolytic cleavage through regulated intramembrane proteolysis (RIP). Involved in salt stress response during seed germination and seedling growth. Binds the auxin-responsive IAA30 gene promoter and may serve as a molecular link that interconnects a developmental feedback loop of auxin signaling with a salt signal transduction pathway during seed germination. This chain is NAC domain-containing protein 69 (NAC69), found in Arabidopsis thaliana (Mouse-ear cress).